The chain runs to 117 residues: Ribosome-binding factor A (117 aa).

This sequence belongs to the RbfA family. Monomer. Binds 30S ribosomal subunits, but not 50S ribosomal subunits or 70S ribosomes.

The protein localises to the cytoplasm. One of several proteins that assist in the late maturation steps of the functional core of the 30S ribosomal subunit. Associates with free 30S ribosomal subunits (but not with 30S subunits that are part of 70S ribosomes or polysomes). Required for efficient processing of 16S rRNA. May interact with the 5'-terminal helix region of 16S rRNA. The sequence is that of Ribosome-binding factor A from Nitrosomonas eutropha (strain DSM 101675 / C91 / Nm57).